The sequence spans 487 residues: Protein nucleotidyltransferase YdiU (487 aa).

ATP-binding residues include Gly-90, Gly-92, Arg-93, Lys-113, Asp-125, Gly-126, Arg-176, and Arg-183. Asp-252 serves as the catalytic Proton acceptor. Residues Asn-253 and Asp-262 each coordinate Mg(2+). Asp-262 is an ATP binding site.

This sequence belongs to the SELO family. Mg(2+) serves as cofactor. Mn(2+) is required as a cofactor.

The enzyme catalyses L-seryl-[protein] + ATP = 3-O-(5'-adenylyl)-L-seryl-[protein] + diphosphate. The catalysed reaction is L-threonyl-[protein] + ATP = 3-O-(5'-adenylyl)-L-threonyl-[protein] + diphosphate. It carries out the reaction L-tyrosyl-[protein] + ATP = O-(5'-adenylyl)-L-tyrosyl-[protein] + diphosphate. It catalyses the reaction L-histidyl-[protein] + UTP = N(tele)-(5'-uridylyl)-L-histidyl-[protein] + diphosphate. The enzyme catalyses L-seryl-[protein] + UTP = O-(5'-uridylyl)-L-seryl-[protein] + diphosphate. The catalysed reaction is L-tyrosyl-[protein] + UTP = O-(5'-uridylyl)-L-tyrosyl-[protein] + diphosphate. Its function is as follows. Nucleotidyltransferase involved in the post-translational modification of proteins. It can catalyze the addition of adenosine monophosphate (AMP) or uridine monophosphate (UMP) to a protein, resulting in modifications known as AMPylation and UMPylation. In Pseudomonas syringae pv. syringae (strain B728a), this protein is Protein nucleotidyltransferase YdiU.